The primary structure comprises 109 residues: Flagellar hook-basal body complex protein FliE (109 aa).

It belongs to the FliE family.

The protein localises to the bacterial flagellum basal body. The chain is Flagellar hook-basal body complex protein FliE from Pseudomonas savastanoi pv. phaseolicola (strain 1448A / Race 6) (Pseudomonas syringae pv. phaseolicola (strain 1448A / Race 6)).